The following is a 416-amino-acid chain: S-layer protein B (416 aa).

Residues 1 to 20 form the signal peptide; that stretch reads MKYNLLPLILLSLLVAPLLA. Residues 310-330 are a coiled coil; sequence IASLNSTIQSLESQISSLSST. The chain crosses the membrane as a helical span at residues 392–412; it reads IALAVSIIAIIISIVVLILVF.

This sequence belongs to the Sulfolobales SlaB family. As to quaternary structure, the mushroom-shaped unit cells of the Sulfolobales' S-layers may consist of three SlaB subunits and six SlaA subunits.

Its subcellular location is the secreted. It is found in the cell wall. The protein localises to the S-layer. It localises to the cell membrane. In terms of biological role, S-layer small protein. May anchor the complex to the cell membrane. The chain is S-layer protein B from Metallosphaera sedula (strain ATCC 51363 / DSM 5348 / JCM 9185 / NBRC 15509 / TH2).